Here is an 872-residue protein sequence, read N- to C-terminus: Extended synaptotagmin-2-A (872 aa).

The segment at 1-25 (MSSESSAEKGPPPSPAENVQPGVPP) is disordered. The Cytoplasmic segment spans residues 1 to 31 (MSSESSAEKGPPPSPAENVQPGVPPAAEEPG). A helical membrane pass occupies residues 32–52 (MISVDIAGLFYQFSKTFILIF). Residues 53–55 (PVY) lie on the Lumenal side of the membrane. A helical transmembrane segment spans residues 56 to 76 (VLGYFGLSFSWLLIALVLLLW). The Cytoplasmic segment spans residues 77-872 (WRRNKGNKNS…EDGTRPAVSS (796 aa)). The region spanning 119 to 298 (DIERAEWLNK…LPNRITVPLV (180 aa)) is the SMP-LTD domain. 2 C2 domains span residues 297–417 (LVSD…DEWF) and 442–588 (NLDQ…HLNN). 9 residues coordinate Ca(2+): lysine 328, aspartate 329, aspartate 341, aspartate 388, glutamate 389, aspartate 390, aspartate 392, aspartate 394, and aspartate 395. The span at 608-617 (KPVRSPDEQH) shows a compositional bias: basic and acidic residues. The segment at 608-711 (KPVRSPDEQH…EPTPSIASDI (104 aa)) is disordered. Residues 632–652 (PPTPQMPSPSPAVAHKPPPTP) show a composition bias toward pro residues. Over residues 664-681 (NKGTPPSASPKSPTELHQ) the composition is skewed to polar residues. Low complexity predominate over residues 682-696 (SSSSLSGSSFTYSPS). The region spanning 737–859 (PLGQIQLTIR…DAAKGWTQWY (123 aa)) is the C2 3 domain. Residues 784–791 (KRRSGRRK) form a required for phosphatidylinositol 4,5-bisphosphate-dependent location at the cell membrane region.

Belongs to the extended synaptotagmin family. Interacts with fgfr1 that has been activated by fgf1 binding. Interacts (via C2 domains) with the AP-2 complex (via an alpha subunit). Identified in a complex with the AP-2 complex and fgfr1.

The protein localises to the cell membrane. Its subcellular location is the endoplasmic reticulum membrane. In terms of biological role, tethers the endoplasmic reticulum to the cell membrane and promotes the formation of appositions between the endoplasmic reticulum and the cell membrane. Binds glycerophospholipids in a barrel-like domain and may play a role in cellular lipid transport. Plays a role in the rapid internalization of fgfr1 that has been activated by fgf1 binding; this occurs most likely via the AP-2 complex. Required for normal fgf signaling and the activation of downstream signaling cascades via its role in the internalization of activated fgfr1. Required for normal embryonic development via its role in fgf signaling and the downstream regulation of t/xBRA expression. The polypeptide is Extended synaptotagmin-2-A (esyt2-a) (Xenopus laevis (African clawed frog)).